The following is a 371-amino-acid chain: uncharacterized protein (371 aa).

It to E.coli YcjY.

This is an uncharacterized protein from Pseudomonas aeruginosa (strain ATCC 15692 / DSM 22644 / CIP 104116 / JCM 14847 / LMG 12228 / 1C / PRS 101 / PAO1).